We begin with the raw amino-acid sequence, 1547 residues long: MANLRSVFEQLNDVSLRAVIQEEAYRDIKLTIKETKTYNPYAHPVAVADSLEKLGIETNPFAVKAHTHAAAKTIELDMYKIVSFYLPKENPTTFMFMKRSKLQYFRRGPQQKDVFLNAHIEPKDVARYDVDTLFDKNVTPQITTNTAFMGDTLHFLPLTAIERIFKSSPKLQTLYATMVLPPEALHRLHSLHPGIYELEFHQEHFIYKPGGHAGAAYIHKYEQLEWIKVGRFKWADEKGLTHMVTSQILETKGANHLFIFQRGRFLTPELRCFSTETKYVTMPPIFLPKQFNARLPIKKTTAQQLFLYVKSVKNVTERDIWAKMRQLLKTSELQDYNPREVTLLVNYFLLIARLRSETCFDNVLSGGMFKKLFKPFIAWWEIQKHKIFGNEEFEQLMEALEWVDVTLTYPTKTFDNRGWVVKLEARRGYEWFADEMHKPKGPELNLEEKKTDPDAASYEKYLKALSLLQKEPEVMEAKEAEATDEPQRPEVKEEQAEASTSGRAEEIQEDPATKKGKEEPNPNRDLLCPCGLHLKIKNAEFPELPVLDHPDHLTGRKAWFFSKDGKPYSYTGGSHASRGWPNWLEKILAAIEIKEPLPEFNQCLVQQFKLQAAIPFHRDDEPCYPKGHQVLTINHSGECLTQIACQKGKASITMGFGDYYLSPVGFQESHKHAVSNTTGGRVSLTFRCTVQQNKFNDDGSMEALDNLPWKAWIPKLQNLGFQGRQLQYDPNGALISPIEEIRSMPKCKPEGVPEVVYKTLDGLARAPTPYSPNPIRARAYTSDVKNCRIGALLRQQGKEWGCRFDALVEAGKRELAISVIHGAGGSGKSQALQTLIKDNPELDITVVLPTNELRLDWLRKLPKAPQEKFKTFEKALLAPPTPIVIFDDYGKLPAGYVEAFCLYFSTVQLIILTGDCKQSVHHESNENATTSSIEPLVKEASELCRYYINATHRNKKDLANKLGVYSEKTGLTEVTHGTTPIPGLHMLVPSLYKKQAFSEMGHKVSTYAGCQGITAPKIQILLTEETSLCSREVLYTALSRAVHSIHFVNASPNNQAFWKKLECTPYLKAFLSTLREEVAQPIEEKKAEPTPVEPPRTHIAKEDAMVEYENVIEKMPEKHEREIFSEKHGHSNCVQTEDPFIQMFSHQQAKDDTLLWATIEARLVISNPKANWQEYLEKRPVGEVLFESYKRAMHLPKMPIPFEEDLWNSSMHEVQKTYLSKPENMIKNGMARQSPDYDPNVISLFLKSQWVKKMEKLGAIKIKPGQTIASFHQATVMLFGTMARYMRRMREVFQPAHIRINCEMTPEDLSSWAAGEGGHWKFKGPSLANDFTAFDQSQDGAMLQFEILKARHHSIPEDILDAYLTIKTNSKIFLGTLAIMRLTGEGPTFDANTECNIAFTHTKFNIPEGTAQLYAGDDSAIDGLPALRPSFKMIEQKLTLRSKPQVALQQKGDWAEFCGFRITPKGLIKDPKKLHASWMLEKKKGNVKNVLRSYELDLALAYQHKDSLHELLSEEELKYHYETVRSIVKSGGGGVLNTYISKDESLY.

An Alphavirus-like MT domain is found at 59 to 227; that stretch reads NPFAVKAHTH…IHKYEQLEWI (169 aa). Composition is skewed to basic and acidic residues over residues 477–495 and 503–522; these read AKEA…KEEQ and RAEE…EPNP. A disordered region spans residues 477–523; the sequence is AKEAEATDEPQRPEVKEEQAEASTSGRAEEIQEDPATKKGKEEPNPN. The region spanning 599-690 is the Fe2OG dioxygenase domain; that stretch reads EFNQCLVQQF…RVSLTFRCTV (92 aa). One can recognise a (+)RNA virus helicase ATP-binding domain in the interval 793–948; the sequence is LRQQGKEWGC…EASELCRYYI (156 aa). 822–829 is an ATP binding site; sequence GAGGSGKS. A (+)RNA virus helicase C-terminal domain is found at 949-1082; sequence NATHRNKKDL…TLREEVAQPI (134 aa). Residues 1324–1431 form the RdRp catalytic domain; it reads GPSLANDFTA…DGLPALRPSF (108 aa).

This sequence belongs to the potexvirus/carlavirus RNA replication protein family.

The enzyme catalyses RNA(n) + a ribonucleoside 5'-triphosphate = RNA(n+1) + diphosphate. The catalysed reaction is ATP + H2O = ADP + phosphate + H(+). RNA replication. The central part of this protein possibly functions as an ATP-binding helicase. This chain is RNA replication protein, found in Papaya mosaic potexvirus (PMV).